Consider the following 328-residue polypeptide: Pyruvate dehydrogenase E1 component subunit beta (328 aa).

Position 60 (E60) interacts with thiamine diphosphate. Positions 113, 162, and 166 each coordinate K(+).

Heterodimer of an alpha and a beta chain. Thiamine diphosphate serves as cofactor.

The protein localises to the plastid. It localises to the chloroplast. It catalyses the reaction N(6)-[(R)-lipoyl]-L-lysyl-[protein] + pyruvate + H(+) = N(6)-[(R)-S(8)-acetyldihydrolipoyl]-L-lysyl-[protein] + CO2. Its function is as follows. The pyruvate dehydrogenase complex catalyzes the overall conversion of pyruvate to acetyl-CoA and CO(2). It contains multiple copies of three enzymatic components: pyruvate dehydrogenase (E1), dihydrolipoamide acetyltransferase (E2) and lipoamide dehydrogenase (E3). This is Pyruvate dehydrogenase E1 component subunit beta (pdhB) from Staurastrum punctulatum (Green alga).